Reading from the N-terminus, the 400-residue chain is Probable peptidoglycan glycosyltransferase FtsW (400 aa).

Helical transmembrane passes span 30 to 50 (LSVLALLGLGLVMVASASIGI), 65 to 84 (QAAYVVLGLAAASLAYRIRL), 92 to 112 (GLLLGFAYFLLILVLVPGVGV), 123 to 143 (LGLFNLQVSEVAKLLFTLYLA), 157 to 177 (FAGFLRPMLLLSGAALLLLME), 179 to 199 (DFGAAVVLMAIGLALLFLAGA), 201 to 221 (LWQFALLVGTVAAALAMLAIT), 247 to 267 (TQSLIAIGSGSWFGVGLGASV), 280 to 300 (FLFAVLAEELGLVGITVVVLL), 321 to 341 (LFGAYLAYGVGVWVSLQAFIN), and 356 to 376 (LPLMSYGGSSMLMTCAAVGLL).

It belongs to the SEDS family. FtsW subfamily.

The protein resides in the cell inner membrane. The catalysed reaction is [GlcNAc-(1-&gt;4)-Mur2Ac(oyl-L-Ala-gamma-D-Glu-L-Lys-D-Ala-D-Ala)](n)-di-trans,octa-cis-undecaprenyl diphosphate + beta-D-GlcNAc-(1-&gt;4)-Mur2Ac(oyl-L-Ala-gamma-D-Glu-L-Lys-D-Ala-D-Ala)-di-trans,octa-cis-undecaprenyl diphosphate = [GlcNAc-(1-&gt;4)-Mur2Ac(oyl-L-Ala-gamma-D-Glu-L-Lys-D-Ala-D-Ala)](n+1)-di-trans,octa-cis-undecaprenyl diphosphate + di-trans,octa-cis-undecaprenyl diphosphate + H(+). Its pathway is cell wall biogenesis; peptidoglycan biosynthesis. Its function is as follows. Peptidoglycan polymerase that is essential for cell division. The sequence is that of Probable peptidoglycan glycosyltransferase FtsW from Thioalkalivibrio sulfidiphilus (strain HL-EbGR7).